The sequence spans 101 residues: DNA-binding protein Fis (101 aa).

The H-T-H motif DNA-binding region spans 77–96 (QTRAANMLGINRGTLRKKLK).

Belongs to the transcriptional regulatory Fis family. Homodimer.

Activates ribosomal RNA transcription. Plays a direct role in upstream activation of rRNA promoters. The chain is DNA-binding protein Fis from Shewanella loihica (strain ATCC BAA-1088 / PV-4).